A 424-amino-acid chain; its full sequence is CinA-like protein (424 aa).

Belongs to the CinA family.

The polypeptide is CinA-like protein (Prochlorococcus marinus (strain AS9601)).